We begin with the raw amino-acid sequence, 287 residues long: Lipoyl synthase (287 aa).

[4Fe-4S] cluster is bound by residues cysteine 34, cysteine 39, cysteine 45, cysteine 60, cysteine 64, cysteine 67, and serine 273. Residues 46–262 (WNKRHATVMI…KYIAYSKGFL (217 aa)) enclose the Radical SAM core domain.

It belongs to the radical SAM superfamily. Lipoyl synthase family. [4Fe-4S] cluster serves as cofactor.

It localises to the cytoplasm. It carries out the reaction [[Fe-S] cluster scaffold protein carrying a second [4Fe-4S](2+) cluster] + N(6)-octanoyl-L-lysyl-[protein] + 2 oxidized [2Fe-2S]-[ferredoxin] + 2 S-adenosyl-L-methionine + 4 H(+) = [[Fe-S] cluster scaffold protein] + N(6)-[(R)-dihydrolipoyl]-L-lysyl-[protein] + 4 Fe(3+) + 2 hydrogen sulfide + 2 5'-deoxyadenosine + 2 L-methionine + 2 reduced [2Fe-2S]-[ferredoxin]. It participates in protein modification; protein lipoylation via endogenous pathway; protein N(6)-(lipoyl)lysine from octanoyl-[acyl-carrier-protein]: step 2/2. Catalyzes the radical-mediated insertion of two sulfur atoms into the C-6 and C-8 positions of the octanoyl moiety bound to the lipoyl domains of lipoate-dependent enzymes, thereby converting the octanoylated domains into lipoylated derivatives. This Wolbachia pipientis wMel protein is Lipoyl synthase.